We begin with the raw amino-acid sequence, 292 residues long: NAD kinase (292 aa).

The active-site Proton acceptor is Asp-72. Residues 72-73, 146-147, His-157, Arg-174, Asp-176, and 187-192 each bind NAD(+); these read DG, NE, and TAYSLS.

Belongs to the NAD kinase family. A divalent metal cation serves as cofactor.

Its subcellular location is the cytoplasm. It catalyses the reaction NAD(+) + ATP = ADP + NADP(+) + H(+). Functionally, involved in the regulation of the intracellular balance of NAD and NADP, and is a key enzyme in the biosynthesis of NADP. Catalyzes specifically the phosphorylation on 2'-hydroxyl of the adenosine moiety of NAD to yield NADP. This is NAD kinase from Shewanella woodyi (strain ATCC 51908 / MS32).